Reading from the N-terminus, the 859-residue chain is Leucine--tRNA ligase (859 aa).

Positions 42 to 52 (PYPSGKLHMGH) match the 'HIGH' region motif. Residues 618 to 622 (KMSKS) carry the 'KMSKS' region motif. Lysine 621 lines the ATP pocket.

Belongs to the class-I aminoacyl-tRNA synthetase family.

It localises to the cytoplasm. The catalysed reaction is tRNA(Leu) + L-leucine + ATP = L-leucyl-tRNA(Leu) + AMP + diphosphate. The polypeptide is Leucine--tRNA ligase (Buchnera aphidicola subsp. Acyrthosiphon pisum (strain APS) (Acyrthosiphon pisum symbiotic bacterium)).